Here is a 381-residue protein sequence, read N- to C-terminus: Beta-lactamase (381 aa).

Residues 1–20 (MMRKSLCCALLLGISCSALA) form the signal peptide. The active-site Acyl-ester intermediate is the Ser84. Tyr170 functions as the Proton acceptor in the catalytic mechanism. 335–337 (KTG) is a binding site for substrate.

It belongs to the class-C beta-lactamase family.

The protein resides in the periplasm. It catalyses the reaction a beta-lactam + H2O = a substituted beta-amino acid. This protein is a serine beta-lactamase with a substrate specificity for cephalosporins. The chain is Beta-lactamase (ampC) from Enterobacter cloacae.